The chain runs to 186 residues: Ribosome-recycling factor (186 aa).

This sequence belongs to the RRF family.

Its subcellular location is the cytoplasm. Its function is as follows. Responsible for the release of ribosomes from messenger RNA at the termination of protein biosynthesis. May increase the efficiency of translation by recycling ribosomes from one round of translation to another. In Bordetella petrii (strain ATCC BAA-461 / DSM 12804 / CCUG 43448), this protein is Ribosome-recycling factor.